Here is a 318-residue protein sequence, read N- to C-terminus: Protein-methionine-sulfoxide reductase catalytic subunit MsrP (318 aa).

Residues 1-40 constitute a signal peptide (tat-type signal); that stretch reads MNRFTRYDVTPEVIFNQRRQIIKAMGLGAAALSLPNIGFA. Mo-molybdopterin is bound by residues N72, 75-76, C130, T165, N217, R222, and 233-235; these read YE and SIK.

The protein belongs to the MsrP family. As to quaternary structure, heterodimer of a catalytic subunit (MsrP) and a heme-binding subunit (MsrQ). It depends on Mo-molybdopterin as a cofactor. Post-translationally, predicted to be exported by the Tat system. The position of the signal peptide cleavage has not been experimentally proven.

It is found in the periplasm. The catalysed reaction is L-methionyl-[protein] + a quinone + H2O = L-methionyl-(S)-S-oxide-[protein] + a quinol. It catalyses the reaction L-methionyl-[protein] + a quinone + H2O = L-methionyl-(R)-S-oxide-[protein] + a quinol. Functionally, part of the MsrPQ system that repairs oxidized periplasmic proteins containing methionine sulfoxide residues (Met-O), using respiratory chain electrons. Thus protects these proteins from oxidative-stress damage caused by reactive species of oxygen and chlorine generated by the host defense mechanisms. MsrPQ is essential for the maintenance of envelope integrity under bleach stress, rescuing a wide series of structurally unrelated periplasmic proteins from methionine oxidation. The catalytic subunit MsrP is non-stereospecific, being able to reduce both (R-) and (S-) diastereoisomers of methionine sulfoxide. In Actinobacillus pleuropneumoniae serotype 3 (strain JL03), this protein is Protein-methionine-sulfoxide reductase catalytic subunit MsrP.